Reading from the N-terminus, the 662-residue chain is UPF0313 protein CPE1196 (662 aa).

The 272-residue stretch at 296–567 (AIEEVKFSLV…AMQRALLQFK (272 aa)) folds into the Radical SAM core domain. [4Fe-4S] cluster-binding residues include C310, C314, and C317. Positions 597-662 (RDKNSFGKGN…QRGSKGKKRR (66 aa)) are disordered. The segment covering 618-632 (NRNENSGRRESEDKK) has biased composition (basic and acidic residues). Residues 633 to 644 (RSSHSKKQRGNK) show a composition bias toward basic residues.

It belongs to the UPF0313 family. Requires [4Fe-4S] cluster as cofactor.

In Clostridium perfringens (strain 13 / Type A), this protein is UPF0313 protein CPE1196.